A 113-amino-acid chain; its full sequence is U11-theraphotoxin-Hhn1a (113 aa).

An N-terminal signal peptide occupies residues 1-21; the sequence is MNTVRVAFLLVFVLAVSLGQA. The propeptide occupies 22–74; the sequence is DKDENRMEMQEKTEQGKSYLDFAENLLLQKLEEPEAKLLEEDSEESRNSRQKR. The segment covering 58–69 has biased composition (basic and acidic residues); that stretch reads KLLEEDSEESRN. A disordered region spans residues 58–83; that stretch reads KLLEEDSEESRNSRQKRCIGEGVPCD. 3 disulfide bridges follow: cysteine 75–cysteine 90, cysteine 82–cysteine 95, and cysteine 89–cysteine 110.

The protein belongs to the neurotoxin 14 (magi-1) family. 01 (HNTX-16) subfamily. As to expression, expressed by the venom gland.

It is found in the secreted. Probable ion channel inhibitor. The sequence is that of U11-theraphotoxin-Hhn1a from Cyriopagopus hainanus (Chinese bird spider).